Reading from the N-terminus, the 177-residue chain is Large ribosomal subunit protein uL6 (177 aa).

This sequence belongs to the universal ribosomal protein uL6 family. As to quaternary structure, part of the 50S ribosomal subunit.

This protein binds to the 23S rRNA, and is important in its secondary structure. It is located near the subunit interface in the base of the L7/L12 stalk, and near the tRNA binding site of the peptidyltransferase center. The protein is Large ribosomal subunit protein uL6 of Laribacter hongkongensis (strain HLHK9).